Here is a 923-residue protein sequence, read N- to C-terminus: Protocadherin gamma-B4 (923 aa).

Positions 1–30 (MGSGAGELGRAERLPVLFLFLLSLFCPALC) are cleaved as a signal peptide. Cadherin domains follow at residues 31–133 (EQIR…TPKF), 134–242 (TQNS…APVF), 243–345 (SQDI…APEV), 346–450 (IFQS…APVF), 451–560 (SQSS…APRV), and 568–673 (DGSA…LPDI). Topologically, residues 31 to 689 (EQIRYRIPEE…SDLEAELQFY (659 aa)) are extracellular. Residues N417 and N543 are each glycosylated (N-linked (GlcNAc...) asparagine). A helical transmembrane segment spans residues 690-710 (LVVALALISVLFLVAMILAIA). Residues 711-923 (LRLRRSSSPA…KKKSGKKEKK (213 aa)) lie on the Cytoplasmic side of the membrane. 2 disordered regions span residues 797 to 832 (SHQQ…WPNN) and 893 to 923 (ATLT…KEKK). Residues 913–923 (NKKKSGKKEKK) are compositionally biased toward basic residues.

The protein localises to the cell membrane. Potential calcium-dependent cell-adhesion protein. May be involved in the establishment and maintenance of specific neuronal connections in the brain. In Pan troglodytes (Chimpanzee), this protein is Protocadherin gamma-B4 (PCDHGB4).